We begin with the raw amino-acid sequence, 421 residues long: UDP-N-acetylglucosamine 1-carboxyvinyltransferase (421 aa).

Phosphoenolpyruvate is bound at residue 22 to 23 (KN). Residue Arg-92 participates in UDP-N-acetyl-alpha-D-glucosamine binding. The active-site Proton donor is Cys-116. Cys-116 is subject to 2-(S-cysteinyl)pyruvic acid O-phosphothioketal. UDP-N-acetyl-alpha-D-glucosamine contacts are provided by Asp-306 and Val-328.

Belongs to the EPSP synthase family. MurA subfamily.

The protein localises to the cytoplasm. The catalysed reaction is phosphoenolpyruvate + UDP-N-acetyl-alpha-D-glucosamine = UDP-N-acetyl-3-O-(1-carboxyvinyl)-alpha-D-glucosamine + phosphate. It participates in cell wall biogenesis; peptidoglycan biosynthesis. Functionally, cell wall formation. Adds enolpyruvyl to UDP-N-acetylglucosamine. In Thermotoga maritima (strain ATCC 43589 / DSM 3109 / JCM 10099 / NBRC 100826 / MSB8), this protein is UDP-N-acetylglucosamine 1-carboxyvinyltransferase.